The sequence spans 135 residues: Large ribosomal subunit protein eL32 (135 aa).

Belongs to the eukaryotic ribosomal protein eL32 family.

The sequence is that of Large ribosomal subunit protein eL32 from Methanococcus maripaludis (strain C5 / ATCC BAA-1333).